The chain runs to 1710 residues: Protein NETWORKED 1B (1710 aa).

An NAB domain is found at 13 to 92; the sequence is YSWWWDSHIP…ERYDHTTVEL (80 aa). Residues 113 to 159 form a disordered region; sequence EDSASSSSEPRTEADTEALQKDGTKSKRSFSQMNKLDGTSDSHEADS. Composition is skewed to basic and acidic residues over residues 122 to 137 and 150 to 159; these read PRTE…DGTK and GTSDSHEADS. Coiled-coil stretches lie at residues 152-446, 474-546, 579-883, 974-1021, 1095-1259, and 1285-1336; these read SDSH…ELGA, QMLR…EIHC, VKKL…IDSL, HQCG…FESL, VSSL…LQEK, and LILE…LSAY. The disordered stretch occupies residues 1409-1448; it reads RLSRQITRSTSQKRRDRRKIENIQPDDQVTGESRQPRLRP. Positions 1559-1665 form a coiled coil; that stretch reads RRLSSLRISL…VLKLEDGTKS (107 aa).

The protein belongs to the NET family. Expressed in root meristems and at very low levels throughout mature vasculature.

Its function is as follows. Plant-specific actin binding protein. May be part of a membrane-cytoskeletal adapter complex. The protein is Protein NETWORKED 1B of Arabidopsis thaliana (Mouse-ear cress).